The primary structure comprises 76 residues: UPF0235 protein MRA_1997 (76 aa).

The protein belongs to the UPF0235 family.

The sequence is that of UPF0235 protein MRA_1997 from Mycobacterium tuberculosis (strain ATCC 25177 / H37Ra).